We begin with the raw amino-acid sequence, 200 residues long: NADH-quinone oxidoreductase subunit C (200 aa).

This sequence belongs to the complex I 30 kDa subunit family. NDH-1 is composed of 14 different subunits. Subunits NuoB, C, D, E, F, and G constitute the peripheral sector of the complex.

The protein localises to the cell inner membrane. It carries out the reaction a quinone + NADH + 5 H(+)(in) = a quinol + NAD(+) + 4 H(+)(out). Its function is as follows. NDH-1 shuttles electrons from NADH, via FMN and iron-sulfur (Fe-S) centers, to quinones in the respiratory chain. The immediate electron acceptor for the enzyme in this species is believed to be ubiquinone. Couples the redox reaction to proton translocation (for every two electrons transferred, four hydrogen ions are translocated across the cytoplasmic membrane), and thus conserves the redox energy in a proton gradient. This chain is NADH-quinone oxidoreductase subunit C, found in Ruegeria pomeroyi (strain ATCC 700808 / DSM 15171 / DSS-3) (Silicibacter pomeroyi).